A 423-amino-acid polypeptide reads, in one-letter code: Probable baseplate hub protein gp334 (423 aa).

Homotrimer. Interacts with gp5 trimer.

The protein resides in the virion. Baseplate protein that is part of the baseplate hub. Involved in the tail assembly. This chain is Probable baseplate hub protein gp334, found in Vibrio parahaemolyticus (KVP40).